Consider the following 278-residue polypeptide: Tumor necrosis factor ligand superfamily member 6 (278 aa).

Over 1–77 (MQQPVNYPCP…SPLKKKDNIE (77 aa)) the chain is Cytoplasmic. The interval 26–68 (PGSVFSCPSSGPRGPGQRRPPPPPPPPSPLPPPSQPPPLPPLS) is disordered. The span at 33-42 (PSSGPRGPGQ) shows a compositional bias: low complexity. Positions 43 to 68 (RRPPPPPPPPSPLPPPSQPPPLPPLS) are enriched in pro residues. The chain crosses the membrane as a helical; Signal-anchor for type II membrane protein span at residues 78-99 (LWLPVIFFMVLVALVGMGLGMY). Residues 100-278 (QLFHLQKELA…SKTFFGLYKL (179 aa)) are Extracellular-facing. An N-linked (GlcNAc...) asparagine glycan is attached at Asn116. A compositionally biased stretch (polar residues) spans 125–135 (EKQIANPSTPS). Positions 125 to 147 (EKQIANPSTPSETKKPRSVAHLT) are disordered. Residues 142–278 (SVAHLTGNPR…SKTFFGLYKL (137 aa)) enclose the THD domain. An intrachain disulfide couples Cys199 to Cys230. Asn247 and Asn257 each carry an N-linked (GlcNAc...) asparagine glycan.

The protein belongs to the tumor necrosis factor family. As to quaternary structure, homotrimer. Interacts with ARHGAP9, BAIAP2L1, BTK, CACNB3, CACNB4, CRK, DLG2, DNMBP, DOCK4, EPS8L3, FGR, FYB1, FYN, HCK, ITK, ITSN2, KALRN, LYN, MACC1, MIA, MPP4, MYO15A, NCF1, NCK1, NCK2, NCKIPSD, OSTF1, PIK3R1, PSTPIP1, RIMBP3C, SAMSN1, SH3GL3, SH3PXD2B, SH3PXD2A, SH3RF2, SKAP2, SNX33, SNX9, SORBS3, SPTA1, SRC, SRGAP1, SRGAP2, SRGAP3, TEC, TJP3 and YES1. Post-translationally, the soluble form derives from the membrane form by proteolytic processing. The membrane-bound form undergoes two successive intramembrane proteolytic cleavages. The first one is processed by ADAM10 producing an N-terminal fragment, which lacks the receptor-binding extracellular domain. This ADAM10-processed FasL (FasL APL) remnant form is still membrane anchored and further processed by SPPL2A that liberates the FasL intracellular domain (FasL ICD). FasL shedding by ADAM10 is a prerequisite for subsequent intramembrane cleavage by SPPL2A in T-cells. Phosphorylated by FGR on tyrosine residues; this is required for ubiquitination and subsequent internalization. In terms of processing, N-glycosylated. Post-translationally, monoubiquitinated. As to expression, expressed in activated splenocytes and thymocytes. Moderate or weak expression found in small intestines, kidney and lung.

The protein resides in the cell membrane. Its subcellular location is the cytoplasmic vesicle lumen. The protein localises to the lysosome lumen. It is found in the secreted. It localises to the nucleus. Cytokine that binds to TNFRSF6/FAS, a receptor that transduces the apoptotic signal into cells. Involved in cytotoxic T-cell-mediated apoptosis, natural killer cell-mediated apoptosis and in T-cell development. Initiates fratricidal/suicidal activation-induced cell death (AICD) in antigen-activated T-cells contributing to the termination of immune responses. TNFRSF6/FAS-mediated apoptosis also has a role in the induction of peripheral tolerance. Binds to TNFRSF6B/DcR3, a decoy receptor that blocks apoptosis. In terms of biological role, induces FAS-mediated activation of NF-kappa-B, initiating non-apoptotic signaling pathways. Can induce apoptosis but does not appear to be essential for this process. Its function is as follows. Cytoplasmic form induces gene transcription inhibition. In Rattus norvegicus (Rat), this protein is Tumor necrosis factor ligand superfamily member 6 (Faslg).